We begin with the raw amino-acid sequence, 189 residues long: Pyridoxal 5'-phosphate synthase subunit PdxT (189 aa).

L-glutamine is bound at residue 46-48; that stretch reads GES. Residue C78 is the Nucleophile of the active site. L-glutamine is bound by residues R107 and 136-137; that span reads IR. Active-site charge relay system residues include H173 and E175.

Belongs to the glutaminase PdxT/SNO family. In terms of assembly, in the presence of PdxS, forms a dodecamer of heterodimers. Only shows activity in the heterodimer.

The catalysed reaction is aldehydo-D-ribose 5-phosphate + D-glyceraldehyde 3-phosphate + L-glutamine = pyridoxal 5'-phosphate + L-glutamate + phosphate + 3 H2O + H(+). The enzyme catalyses L-glutamine + H2O = L-glutamate + NH4(+). Its pathway is cofactor biosynthesis; pyridoxal 5'-phosphate biosynthesis. Its function is as follows. Catalyzes the hydrolysis of glutamine to glutamate and ammonia as part of the biosynthesis of pyridoxal 5'-phosphate. The resulting ammonia molecule is channeled to the active site of PdxS. In Roseiflexus castenholzii (strain DSM 13941 / HLO8), this protein is Pyridoxal 5'-phosphate synthase subunit PdxT.